Consider the following 783-residue polypeptide: E3 UFM1-protein ligase 1 homolog (783 aa).

Residues 404 to 482 (SNSSANFDAD…AGSSRKSVKP (79 aa)) form a disordered region. Basic residues predominate over residues 445 to 457 (KSTKKHQRGRAAA).

This sequence belongs to the UFL1 family.

In terms of biological role, E3 UFM1-protein ligase that mediates ufmylation of target proteins. This is E3 UFM1-protein ligase 1 homolog from Drosophila mojavensis (Fruit fly).